A 290-amino-acid chain; its full sequence is Lipoyl synthase 2 (290 aa).

[4Fe-4S] cluster is bound by residues C37, C42, C48, C63, C67, C70, and S283. Residues 49–272 (YGQKTATFLL…GNIARELGFS (224 aa)) form the Radical SAM core domain.

The protein belongs to the radical SAM superfamily. Lipoyl synthase family. [4Fe-4S] cluster serves as cofactor.

Its subcellular location is the cytoplasm. The enzyme catalyses [[Fe-S] cluster scaffold protein carrying a second [4Fe-4S](2+) cluster] + N(6)-octanoyl-L-lysyl-[protein] + 2 oxidized [2Fe-2S]-[ferredoxin] + 2 S-adenosyl-L-methionine + 4 H(+) = [[Fe-S] cluster scaffold protein] + N(6)-[(R)-dihydrolipoyl]-L-lysyl-[protein] + 4 Fe(3+) + 2 hydrogen sulfide + 2 5'-deoxyadenosine + 2 L-methionine + 2 reduced [2Fe-2S]-[ferredoxin]. Its pathway is protein modification; protein lipoylation via endogenous pathway; protein N(6)-(lipoyl)lysine from octanoyl-[acyl-carrier-protein]: step 2/2. Functionally, catalyzes the radical-mediated insertion of two sulfur atoms into the C-6 and C-8 positions of the octanoyl moiety bound to the lipoyl domains of lipoate-dependent enzymes, thereby converting the octanoylated domains into lipoylated derivatives. The polypeptide is Lipoyl synthase 2 (Thermosynechococcus vestitus (strain NIES-2133 / IAM M-273 / BP-1)).